Reading from the N-terminus, the 55-residue chain is MAKGVREKIKLVSSAGTGHFYTTTKNKRTKPEKLELKKFDPVVRQHVVYKEAKIK.

The protein belongs to the bacterial ribosomal protein bL33 family.

The protein is Large ribosomal subunit protein bL33 of Pectobacterium carotovorum subsp. carotovorum (strain PC1).